Reading from the N-terminus, the 199-residue chain is Ribonuclease HII (199 aa).

Residues 7-196 enclose the RNase H type-2 domain; that stretch reads PWVCGVDEAG…VRELMANEKD (190 aa). A divalent metal cation-binding residues include Asp-13, Glu-14, and Asp-105.

The protein belongs to the RNase HII family. The cofactor is Mn(2+). Mg(2+) is required as a cofactor.

It is found in the cytoplasm. The enzyme catalyses Endonucleolytic cleavage to 5'-phosphomonoester.. Its function is as follows. Endonuclease that specifically degrades the RNA of RNA-DNA hybrids. The chain is Ribonuclease HII from Nitrosospira multiformis (strain ATCC 25196 / NCIMB 11849 / C 71).